Here is a 111-residue protein sequence, read N- to C-terminus: Ribosome-binding factor A (111 aa).

It belongs to the RbfA family. Monomer. Binds 30S ribosomal subunits, but not 50S ribosomal subunits or 70S ribosomes.

Its subcellular location is the cytoplasm. Its function is as follows. One of several proteins that assist in the late maturation steps of the functional core of the 30S ribosomal subunit. Associates with free 30S ribosomal subunits (but not with 30S subunits that are part of 70S ribosomes or polysomes). Required for efficient processing of 16S rRNA. May interact with the 5'-terminal helix region of 16S rRNA. This is Ribosome-binding factor A from Helicobacter pylori (strain P12).